Consider the following 1170-residue polypeptide: Type I restriction enzyme EcoKI endonuclease subunit (1170 aa).

Residues 143-229 are a coiled coil; the sequence is YHQEVLTLKQ…QERKAYHKEI (87 aa). Positions 431–450 form a DNA-binding region, H-T-H motif; sequence NQWFADNPGMSELGLRYYQE. Residues 458-639 form the Helicase ATP-binding domain; that stretch reads KAIVKGQQEI…GEPVYRYTYR (182 aa). 472-478 contacts ATP; that stretch reads ATGTGKT. The DEAH box signature appears at 574–577; it reads DEAH. One can recognise a Helicase C-terminal domain in the interval 714 to 879; that stretch reads ELTNYLDPTG…TLVNEITDSE (166 aa).

The protein belongs to the HsdR family. As to quaternary structure, the type I restriction/modification system is composed of three polypeptides R, M and S. The restriction enzyme has stoichiometry R(2)M(2)S(1). The methyltransferase is composed of M(2)S(1). In terms of assembly, (Microbial infection) Interacts with Escherichia phage T7 protein Ocr; this interaction leads to the inhibition of the type I bifunctional endonuclease and methyltransferase restriction enzyme R.EcoKI composed of R(2)M(2)S(1). In terms of processing, upon purification after overexpression about one-third has the initiating methionine removed.

It carries out the reaction Endonucleolytic cleavage of DNA to give random double-stranded fragments with terminal 5'-phosphates, ATP is simultaneously hydrolyzed.. In terms of biological role, the subtype A restriction (R) subunit of a type I restriction enzyme that recognizes 5'-AACN(6)GTGC-3' and cleaves a random distance away. The R subunit is required for both endonuclease and ATPase activities but not for modification. Has endonucleolytic activity that requires Mg(2+), ATP and S-adenosyl-L-methionine (SAM); ATP can be replaced by dATP, no tested molecule could substitute for SAM. Generates double-stranded DNA with no nicks, by cutting one strand then the other within a few seconds. Cleaves only non-methylated DNA, hemi-methylated and fully methylated DNA are not substrates. After locating a non-methylated recognition site, the enzyme complex serves as a molecular motor that translocates DNA in an ATP-dependent manner until a collision occurs that triggers cleavage. This is Type I restriction enzyme EcoKI endonuclease subunit from Escherichia coli (strain K12).